The sequence spans 305 residues: Methionyl-tRNA formyltransferase (305 aa).

111-114 (SLLP) contacts (6S)-5,6,7,8-tetrahydrofolate.

The protein belongs to the Fmt family.

It catalyses the reaction L-methionyl-tRNA(fMet) + (6R)-10-formyltetrahydrofolate = N-formyl-L-methionyl-tRNA(fMet) + (6S)-5,6,7,8-tetrahydrofolate + H(+). Its function is as follows. Attaches a formyl group to the free amino group of methionyl-tRNA(fMet). The formyl group appears to play a dual role in the initiator identity of N-formylmethionyl-tRNA by promoting its recognition by IF2 and preventing the misappropriation of this tRNA by the elongation apparatus. The sequence is that of Methionyl-tRNA formyltransferase from Campylobacter jejuni (strain RM1221).